We begin with the raw amino-acid sequence, 297 residues long: 4-hydroxy-tetrahydrodipicolinate synthase (297 aa).

Residue threonine 49 coordinates pyruvate. Catalysis depends on tyrosine 137, which acts as the Proton donor/acceptor. The active-site Schiff-base intermediate with substrate is the lysine 166. Isoleucine 208 is a binding site for pyruvate.

It belongs to the DapA family. In terms of assembly, homotetramer; dimer of dimers.

Its subcellular location is the cytoplasm. The catalysed reaction is L-aspartate 4-semialdehyde + pyruvate = (2S,4S)-4-hydroxy-2,3,4,5-tetrahydrodipicolinate + H2O + H(+). The protein operates within amino-acid biosynthesis; L-lysine biosynthesis via DAP pathway; (S)-tetrahydrodipicolinate from L-aspartate: step 3/4. Its function is as follows. Catalyzes the condensation of (S)-aspartate-beta-semialdehyde [(S)-ASA] and pyruvate to 4-hydroxy-tetrahydrodipicolinate (HTPA). In Parabacteroides distasonis (strain ATCC 8503 / DSM 20701 / CIP 104284 / JCM 5825 / NCTC 11152), this protein is 4-hydroxy-tetrahydrodipicolinate synthase.